A 329-amino-acid polypeptide reads, in one-letter code: Ribosomal RNA small subunit methyltransferase H (329 aa).

Residues 34–36 (GGH), aspartate 59, phenylalanine 86, aspartate 112, and glutamine 119 each bind S-adenosyl-L-methionine.

It belongs to the methyltransferase superfamily. RsmH family.

The protein resides in the cytoplasm. The enzyme catalyses cytidine(1402) in 16S rRNA + S-adenosyl-L-methionine = N(4)-methylcytidine(1402) in 16S rRNA + S-adenosyl-L-homocysteine + H(+). Its function is as follows. Specifically methylates the N4 position of cytidine in position 1402 (C1402) of 16S rRNA. In Chlorobium phaeobacteroides (strain DSM 266 / SMG 266 / 2430), this protein is Ribosomal RNA small subunit methyltransferase H.